Here is a 277-residue protein sequence, read N- to C-terminus: Ribosomal RNA small subunit methyltransferase A (277 aa).

6 residues coordinate S-adenosyl-L-methionine: Asn26, Leu28, Gly53, Glu74, Asp101, and Asn123.

It belongs to the class I-like SAM-binding methyltransferase superfamily. rRNA adenine N(6)-methyltransferase family. RsmA subfamily.

The protein localises to the cytoplasm. It carries out the reaction adenosine(1518)/adenosine(1519) in 16S rRNA + 4 S-adenosyl-L-methionine = N(6)-dimethyladenosine(1518)/N(6)-dimethyladenosine(1519) in 16S rRNA + 4 S-adenosyl-L-homocysteine + 4 H(+). Specifically dimethylates two adjacent adenosines (A1518 and A1519) in the loop of a conserved hairpin near the 3'-end of 16S rRNA in the 30S particle. May play a critical role in biogenesis of 30S subunits. The polypeptide is Ribosomal RNA small subunit methyltransferase A (Opitutus terrae (strain DSM 11246 / JCM 15787 / PB90-1)).